The sequence spans 438 residues: Adenosylhomocysteinase (438 aa).

3 residues coordinate substrate: Thr61, Asp137, and Glu162. 163–165 is an NAD(+) binding site; it reads TTT. Positions 192 and 196 each coordinate substrate. Residues Asn197, 226–231, Glu249, Asn284, 305–307, and Asn352 each bind NAD(+); these read GYGDVG and IGH.

This sequence belongs to the adenosylhomocysteinase family. NAD(+) is required as a cofactor.

The protein resides in the cytoplasm. It catalyses the reaction S-adenosyl-L-homocysteine + H2O = L-homocysteine + adenosine. Its pathway is amino-acid biosynthesis; L-homocysteine biosynthesis; L-homocysteine from S-adenosyl-L-homocysteine: step 1/1. In terms of biological role, may play a key role in the regulation of the intracellular concentration of adenosylhomocysteine. This chain is Adenosylhomocysteinase, found in Christiangramia forsetii (strain DSM 17595 / CGMCC 1.15422 / KT0803) (Gramella forsetii).